Consider the following 181-residue polypeptide: Shikimate kinase (181 aa).

Gly-23–Thr-28 is a binding site for ATP. A Mg(2+)-binding site is contributed by Ser-27. Substrate-binding residues include Asp-45, Arg-69, and Gly-91. Arg-129 serves as a coordination point for ATP. Arg-148 is a binding site for substrate.

Belongs to the shikimate kinase family. In terms of assembly, monomer. It depends on Mg(2+) as a cofactor.

The protein resides in the cytoplasm. The catalysed reaction is shikimate + ATP = 3-phosphoshikimate + ADP + H(+). The protein operates within metabolic intermediate biosynthesis; chorismate biosynthesis; chorismate from D-erythrose 4-phosphate and phosphoenolpyruvate: step 5/7. In terms of biological role, catalyzes the specific phosphorylation of the 3-hydroxyl group of shikimic acid using ATP as a cosubstrate. The polypeptide is Shikimate kinase (Geobacter sulfurreducens (strain ATCC 51573 / DSM 12127 / PCA)).